A 179-amino-acid polypeptide reads, in one-letter code: Crossover junction endodeoxyribonuclease RuvC (179 aa).

Catalysis depends on residues Asp7, Glu67, and Asp139. 3 residues coordinate Mg(2+): Asp7, Glu67, and Asp139.

Belongs to the RuvC family. In terms of assembly, homodimer which binds Holliday junction (HJ) DNA. The HJ becomes 2-fold symmetrical on binding to RuvC with unstacked arms; it has a different conformation from HJ DNA in complex with RuvA. In the full resolvosome a probable DNA-RuvA(4)-RuvB(12)-RuvC(2) complex forms which resolves the HJ. The cofactor is Mg(2+).

The protein localises to the cytoplasm. It catalyses the reaction Endonucleolytic cleavage at a junction such as a reciprocal single-stranded crossover between two homologous DNA duplexes (Holliday junction).. In terms of biological role, the RuvA-RuvB-RuvC complex processes Holliday junction (HJ) DNA during genetic recombination and DNA repair. Endonuclease that resolves HJ intermediates. Cleaves cruciform DNA by making single-stranded nicks across the HJ at symmetrical positions within the homologous arms, yielding a 5'-phosphate and a 3'-hydroxyl group; requires a central core of homology in the junction. The consensus cleavage sequence is 5'-(A/T)TT(C/G)-3'. Cleavage occurs on the 3'-side of the TT dinucleotide at the point of strand exchange. HJ branch migration catalyzed by RuvA-RuvB allows RuvC to scan DNA until it finds its consensus sequence, where it cleaves and resolves the cruciform DNA. This Sorangium cellulosum (strain So ce56) (Polyangium cellulosum (strain So ce56)) protein is Crossover junction endodeoxyribonuclease RuvC.